The primary structure comprises 821 residues: Ent-isokaur-15-ene synthase (821 aa).

Residues D556, D560, N701, T705, and E709 each contribute to the Mg(2+) site. Residues 556–560 (DDFFD) carry the DDXXD motif motif.

This sequence belongs to the terpene synthase family. Requires Mg(2+) as cofactor.

The enzyme catalyses ent-copalyl diphosphate = ent-isokaurene + diphosphate. It participates in secondary metabolite biosynthesis; terpenoid biosynthesis. Involved in the biosynthesis of ent-kaurene diterpenoids natural products. Catalyzes the conversion of ent-copalyl diphosphate to the phytoalexin precursor ent-isokaur-15-ene. This is Ent-isokaur-15-ene synthase from Oryza sativa subsp. indica (Rice).